The primary structure comprises 568 residues: MQVELIIKNLNVYNSYFKKFIKGDILINKGKFLHIGKGYEDRLWSENVIDGEGKYIIPGLIDIHMHIESSMTIPREFSKAAIKHGVTTVVADPHEIANVFGIRGIEEFIKFKGNLDIFYGIPSSVPSTSSSLETTGEKITHNEVKRLLEYDNIICLGEVMNFKDLIEDDDSNINKIINISKEKNIPLEGHCPKIQGVDLSLYIYRGVNGDHTQQSVGSLQEKIQNGMFIEMQHKSMTLENIKFLIENNLYEHFALVTDDVMADKLVKGHLDEILKEAVKLGMSIENAIYASTYTPARRMNLLDRGTIAPGKLADFILLDSIEDFNIYEVYKNGEMVFNRDKGLKEEFFEDKSKLDYRFYNSIELNNITKESLEVKVPNKYKNKVNCRTMKVLKNTTFTEEGEVTLNVYNNILQWEKSSCALIAVFERYGKNNNISFGLVEGEIIKEGAIATTWAHDHHNLMVMGRNISDMTIAANEVINSRGGYVVSKNNEVIAKLELPIGGIISDEPIEIIGEKLGEVRSAMRDLGYNHMNEIMSFSTLSLPVSPALKITDKGLIDVKKGSIVSLFK.

It belongs to the metallo-dependent hydrolases superfamily. Adenine deaminase family. It depends on Mn(2+) as a cofactor.

The catalysed reaction is adenine + H2O + H(+) = hypoxanthine + NH4(+). The chain is Adenine deaminase from Clostridium perfringens (strain ATCC 13124 / DSM 756 / JCM 1290 / NCIMB 6125 / NCTC 8237 / Type A).